A 112-amino-acid polypeptide reads, in one-letter code: Ribonuclease P protein component (112 aa).

It belongs to the RnpA family. As to quaternary structure, consists of a catalytic RNA component (M1 or rnpB) and a protein subunit.

The catalysed reaction is Endonucleolytic cleavage of RNA, removing 5'-extranucleotides from tRNA precursor.. In terms of biological role, RNaseP catalyzes the removal of the 5'-leader sequence from pre-tRNA to produce the mature 5'-terminus. It can also cleave other RNA substrates such as 4.5S RNA. The protein component plays an auxiliary but essential role in vivo by binding to the 5'-leader sequence and broadening the substrate specificity of the ribozyme. This Clostridium kluyveri (strain ATCC 8527 / DSM 555 / NBRC 12016 / NCIMB 10680 / K1) protein is Ribonuclease P protein component.